A 767-amino-acid polypeptide reads, in one-letter code: Protein SQS1 (767 aa).

The segment covering 1–34 (MAKRHKHFEGRGRGGSRGRGRGRGGSRGRGRGGS) has biased composition (basic residues). Disordered regions lie at residues 1–71 (MAKR…FNFA), 101–127 (SMKMGGLRPGHKREDTPRSSSFRARPV), 147–258 (RSKN…STVK), 363–387 (KNSSDISRDNSPDNNEEQESKDPEF), and 466–494 (EEPPEPTYSDIHFSDTSEEESDNDSEIGD). Residues 35 to 45 (RSRGAGRGGFG) show a composition bias toward gly residues. Over residues 173–239 (ESGTEEEIEE…LFFIDEEGYN (67 aa)) the composition is skewed to acidic residues. Polar residues predominate over residues 245-254 (TVPSVSISED). Positions 481–493 (TSEEESDNDSEIG) are enriched in acidic residues. Positions 589–652 (GLHVLNIKEE…QTHIFVQKVK (64 aa)) constitute an R3H domain. The 48-residue stretch at 716–763 (RNNIGRILLERLGWSEGEGLGIQGNKGISEPVFAVVKKSKTGLRHERK) folds into the G-patch domain.

It belongs to the SQS1 family.

The protein localises to the cytoplasm. It localises to the nucleus. In terms of biological role, may be involved in splicing. The chain is Protein SQS1 (SQS1) from Vanderwaltozyma polyspora (strain ATCC 22028 / DSM 70294 / BCRC 21397 / CBS 2163 / NBRC 10782 / NRRL Y-8283 / UCD 57-17) (Kluyveromyces polysporus).